The chain runs to 109 residues: Cell division protein ZapA (109 aa).

Positions 21 to 97 form a coiled coil; sequence PEQRDALSQA…QTIEQALLDQ (77 aa).

Belongs to the ZapA family. Type 1 subfamily. In terms of assembly, homodimer. Interacts with FtsZ.

The protein localises to the cytoplasm. Functionally, activator of cell division through the inhibition of FtsZ GTPase activity, therefore promoting FtsZ assembly into bundles of protofilaments necessary for the formation of the division Z ring. It is recruited early at mid-cell but it is not essential for cell division. The protein is Cell division protein ZapA of Enterobacter sp. (strain 638).